Reading from the N-terminus, the 117-residue chain is Ubiquitin-like protein 3 (117 aa).

Residues 10 to 88 (INLRLILVSG…PFGKTTVMHL (79 aa)) form the Ubiquitin-like domain. Cysteine 113 carries the S-palmitoyl cysteine lipid modification. At cysteine 114 the chain carries Cysteine methyl ester. Cysteine 114 is lipidated: S-geranylgeranyl cysteine. The propeptide at 115–117 (VIL) is removed in mature form.

It localises to the cell membrane. The protein is Ubiquitin-like protein 3 (UBL3) of Bos taurus (Bovine).